Reading from the N-terminus, the 82-residue chain is Small ribosomal subunit protein bS16 (82 aa).

This sequence belongs to the bacterial ribosomal protein bS16 family.

The chain is Small ribosomal subunit protein bS16 from Haemophilus influenzae (strain 86-028NP).